We begin with the raw amino-acid sequence, 143 residues long: Large ribosomal subunit protein uL13 (143 aa).

The protein belongs to the universal ribosomal protein uL13 family. In terms of assembly, part of the 50S ribosomal subunit.

This protein is one of the early assembly proteins of the 50S ribosomal subunit, although it is not seen to bind rRNA by itself. It is important during the early stages of 50S assembly. The chain is Large ribosomal subunit protein uL13 from Finegoldia magna (strain ATCC 29328 / DSM 20472 / WAL 2508) (Peptostreptococcus magnus).